An 804-amino-acid chain; its full sequence is Pentatricopeptide repeat-containing protein At4g35130, chloroplastic (804 aa).

A chloroplast-targeting transit peptide spans 1 to 19 (MAATLLSQCYRIYNSDACK). PPR repeat units lie at residues 63–93 (NDPA…MNKA), 94–128 (DAFL…GVKA), 129–163 (DTFT…GFVS), 164–194 (DVYV…MPER), 195–229 (DIVS…GFKP), 230–264 (DRFS…RIET), 266–296 (DVMV…MIQR), 297–332 (NIVA…GLQP), 333–363 (DVIT…GFLP), 364–394 (HMVL…MAEK), 395–429 (NVIS…SLVP), 430–464 (DSTT…RYWS), 465–495 (NTII…ILLK), 496–530 (DVVS…RVNP), 531–561 (NKST…MKRE), and 567–597 (GIEH…MPFV). Positions 602–677 (IWGSLLNASR…TSSRSTVEAK (76 aa)) are type E motif. The tract at residues 678–708 (GKSHVFTNGDRSHVATNKIYEVLDVVSRMVG) is type E(+) motif. Residues 710–804 (EDIYVHCVSR…NGRCSCGNYW (95 aa)) are type DYW motif.

The protein belongs to the PPR family. PCMP-H subfamily.

Its subcellular location is the plastid. The protein resides in the chloroplast. In Arabidopsis thaliana (Mouse-ear cress), this protein is Pentatricopeptide repeat-containing protein At4g35130, chloroplastic (PCMP-H27).